The sequence spans 241 residues: L-aspartate dehydrogenase (241 aa).

NAD(+) is bound by residues 10 to 11, aspartate 28, 56 to 57, 63 to 64, 78 to 79, alanine 109, and asparagine 164; these read NI, AS, EY, and IS. The active site involves histidine 193.

The protein belongs to the L-aspartate dehydrogenase family. In terms of assembly, homodimer.

It catalyses the reaction L-aspartate + NADP(+) + H2O = oxaloacetate + NH4(+) + NADPH + H(+). The enzyme catalyses L-aspartate + NAD(+) + H2O = oxaloacetate + NH4(+) + NADH + H(+). It participates in cofactor biosynthesis; NAD(+) biosynthesis; iminoaspartate from L-aspartate (dehydrogenase route): step 1/1. With respect to regulation, competitively inhibited by L-malate and NH(4)(+). Its function is as follows. Specifically catalyzes the NAD or NADP-dependent dehydrogenation of L-aspartate to iminoaspartate. Does not show aspartate oxidase activity. Is also able to catalyze the reverse reaction, i.e. the reductive amination of oxaloacetate. The polypeptide is L-aspartate dehydrogenase (Thermotoga maritima (strain ATCC 43589 / DSM 3109 / JCM 10099 / NBRC 100826 / MSB8)).